Here is a 195-residue protein sequence, read N- to C-terminus: Segregation and condensation protein B (195 aa).

The protein belongs to the ScpB family. In terms of assembly, homodimer. Homodimerization may be required to stabilize the binding of ScpA to the Smc head domains. Component of a cohesin-like complex composed of ScpA, ScpB and the Smc homodimer, in which ScpA and ScpB bind to the head domain of Smc. The presence of the three proteins is required for the association of the complex with DNA.

The protein resides in the cytoplasm. Functionally, participates in chromosomal partition during cell division. May act via the formation of a condensin-like complex containing Smc and ScpA that pull DNA away from mid-cell into both cell halves. This is Segregation and condensation protein B from Clostridium perfringens (strain SM101 / Type A).